A 126-amino-acid polypeptide reads, in one-letter code: Large ribosomal subunit protein eL8 (126 aa).

Belongs to the eukaryotic ribosomal protein eL8 family. As to quaternary structure, part of the 50S ribosomal subunit. Probably part of the RNase P complex.

The protein resides in the cytoplasm. Multifunctional RNA-binding protein that recognizes the K-turn motif in ribosomal RNA, the RNA component of RNase P, box H/ACA, box C/D and box C'/D' sRNAs. In Sulfolobus acidocaldarius (strain ATCC 33909 / DSM 639 / JCM 8929 / NBRC 15157 / NCIMB 11770), this protein is Large ribosomal subunit protein eL8.